The sequence spans 185 residues: Threonylcarbamoyl-AMP synthase (185 aa).

Positions 4–185 constitute a YrdC-like domain; that stretch reads SWRVQQAARE…LATGKVVRPS (182 aa).

Belongs to the SUA5 family. TsaC subfamily.

The protein localises to the cytoplasm. It carries out the reaction L-threonine + hydrogencarbonate + ATP = L-threonylcarbamoyladenylate + diphosphate + H2O. Its function is as follows. Required for the formation of a threonylcarbamoyl group on adenosine at position 37 (t(6)A37) in tRNAs that read codons beginning with adenine. Catalyzes the conversion of L-threonine, HCO(3)(-)/CO(2) and ATP to give threonylcarbamoyl-AMP (TC-AMP) as the acyladenylate intermediate, with the release of diphosphate. The sequence is that of Threonylcarbamoyl-AMP synthase from Pseudomonas fluorescens (strain ATCC BAA-477 / NRRL B-23932 / Pf-5).